The chain runs to 392 residues: Phosphoglycerate kinase (392 aa).

Residues 21–23, R36, 59–62, R114, and R147 each bind substrate; these read DMN and HLGR. ATP contacts are provided by residues K198, E320, and 346 to 349; that span reads GGDT.

It belongs to the phosphoglycerate kinase family. In terms of assembly, monomer.

The protein resides in the cytoplasm. It catalyses the reaction (2R)-3-phosphoglycerate + ATP = (2R)-3-phospho-glyceroyl phosphate + ADP. It functions in the pathway carbohydrate degradation; glycolysis; pyruvate from D-glyceraldehyde 3-phosphate: step 2/5. The chain is Phosphoglycerate kinase (pgk) from Neisseria meningitidis serogroup B (strain ATCC BAA-335 / MC58).